Here is a 735-residue protein sequence, read N- to C-terminus: Ethylene receptor 1 (735 aa).

The next 3 helical transmembrane spans lie at 23-43 (ISDF…IYFV), 54-74 (VLVQ…INLW), and 92-112 (VLTA…IPDL). Positions 65 and 69 each coordinate Cu cation. The region spanning 158–307 (DRHTILKTTL…VVADQVAVAL (150 aa)) is the GAF domain. The Histidine kinase domain occupies 350 to 586 (VMNHEMRTPM…IFDVKLAISN (237 aa)). At histidine 353 the chain carries Phosphohistidine; by autocatalysis. The Response regulatory domain occupies 609–726 (KVLVMDENGV…NMRNVLSDRL (118 aa)). At aspartate 657 the chain carries 4-aspartylphosphate. A Glycyl lysine isopeptide (Lys-Gly) (interchain with G-Cter in ubiquitin) cross-link involves residue lysine 711.

This sequence belongs to the ethylene receptor family. As to quaternary structure, homodimer; disulfide-linked. Cu cation serves as cofactor. Post-translationally, activation probably requires a transfer of a phosphate group between a His in the transmitter domain and an Asp of the receiver domain.

The protein localises to the endoplasmic reticulum membrane. It catalyses the reaction ATP + protein L-histidine = ADP + protein N-phospho-L-histidine.. Functionally, may act early in the ethylene signal transduction pathway, possibly as an ethylene receptor, or as a regulator of the pathway. The sequence is that of Ethylene receptor 1 (ETR1) from Brassica oleracea (Wild cabbage).